We begin with the raw amino-acid sequence, 261 residues long: Homeobox protein ceh-33 (261 aa).

The segment at residues 133–192 is a DNA-binding region (homeobox); it reads GEETSYCFRDKSRVLLRDWYCRNSYPSPREKRELAEKTHLTVTQVSNWFKNRRQRDRAGV.

The protein belongs to the SIX/Sine oculis homeobox family.

The protein resides in the nucleus. The protein is Homeobox protein ceh-33 (ceh-33) of Caenorhabditis elegans.